A 600-amino-acid polypeptide reads, in one-letter code: Autophagy-related protein 22-2 (600 aa).

Residues 1–30 (MAFASPPASPPDEDGQARAPRYPGEDTTPT) form a disordered region. The next 4 membrane-spanning stretches (helical) occupy residues 41 to 61 (YGIA…PLTL), 117 to 137 (SFAM…LISF), 149 to 168 (TLLV…FVFI), and 186 to 206 (CLGS…ASDP). Positions 234 to 257 (SFDGDEPTHRPPTGLGLGGATGTS) are disordered. 4 helical membrane passes run 271-291 (GVGL…LLLF), 304-324 (TLPL…FTMV), 378-398 (VIVF…VSGT), and 414-434 (VALL…LWPI). Asparagine 444 carries N-linked (GlcNAc...) asparagine glycosylation. 4 consecutive transmembrane segments (helical) span residues 449–469 (VCIA…IPLF), 484–506 (YPLA…SFFG), 526–546 (KGSS…TGQV), and 549–569 (GFFF…MVDA).

This sequence belongs to the ATG22 family.

Its subcellular location is the vacuole membrane. In terms of biological role, vacuolar effluxer which mediate the efflux of amino acids resulting from autophagic degradation. The release of autophagic amino acids allows the maintenance of protein synthesis and viability during nitrogen starvation. The sequence is that of Autophagy-related protein 22-2 (atg22-2) from Aspergillus niger (strain ATCC MYA-4892 / CBS 513.88 / FGSC A1513).